The sequence spans 218 residues: Putative NAD(P)H nitroreductase SH0546 (218 aa).

Belongs to the nitroreductase family. Requires FMN as cofactor.

This is Putative NAD(P)H nitroreductase SH0546 from Staphylococcus haemolyticus (strain JCSC1435).